Here is a 363-residue protein sequence, read N- to C-terminus: Uroporphyrinogen decarboxylase (363 aa).

Substrate is bound by residues 27–31, aspartate 77, tyrosine 157, threonine 212, and histidine 333; that span reads RQAGR.

It belongs to the uroporphyrinogen decarboxylase family. Homodimer.

It localises to the cytoplasm. The enzyme catalyses uroporphyrinogen III + 4 H(+) = coproporphyrinogen III + 4 CO2. The protein operates within porphyrin-containing compound metabolism; protoporphyrin-IX biosynthesis; coproporphyrinogen-III from 5-aminolevulinate: step 4/4. In terms of biological role, catalyzes the decarboxylation of four acetate groups of uroporphyrinogen-III to yield coproporphyrinogen-III. The chain is Uroporphyrinogen decarboxylase from Cupriavidus necator (strain ATCC 17699 / DSM 428 / KCTC 22496 / NCIMB 10442 / H16 / Stanier 337) (Ralstonia eutropha).